A 1373-amino-acid chain; its full sequence is Poly(A) RNA polymerase gld-2 homolog B (1373 aa).

Over residues 75–91 (NSCHSSNSSSNTSNNNN) the composition is skewed to low complexity. Disordered regions lie at residues 75–155 (NSCH…QEKQ), 175–340 (SDCK…FWKT), 425–543 (PDST…QQQK), 734–770 (PQQQQQQQLSSHPIPTGTSSHPPPPPPPHMFFHFADG), 802–866 (CGSG…ALGS), and 880–928 (HPLH…PTPV). The span at 96–112 (GQQQQPLHYCNSNNSHS) shows a compositional bias: polar residues. Low complexity-rich tracts occupy residues 130–152 (QQQQQPSSFFQRQQQQHQMQMQQ), 180–219 (SDSNNNSTSSSNNNSTISSNNNNTSSASNNNTGSSSSCSN), 228–251 (NENSSSSSSSNNNNISCRNNNTSS), and 274–284 (ESGSSEGAAES). Composition is skewed to polar residues over residues 295-340 (CNSN…FWKT) and 430-442 (KSSSNTGGSNMIR). The segment covering 443 to 485 (SSSNGNSNFSRHQYGHQSTGSGYQQQQQRYRNAQNVYQQYQHQ) has biased composition (low complexity). The span at 486–502 (QQHHAQQHTHPHFRRKH) shows a compositional bias: basic residues. 2 stretches are compositionally biased toward low complexity: residues 735–753 (QQQQQQQLSSHPIPTGTSS) and 819–844 (AGALRPASPALSSSSLGSESQWSGTS). A compositionally biased stretch (polar residues) spans 855-866 (PSISPTPSALGS). The span at 880 to 890 (HPLHQQHPPSH) shows a compositional bias: low complexity. Residues 945–1373 (RYLAQARNIE…FAETTAAHVA (429 aa)) are sufficent for interaction with Dcr-2. Mg(2+) contacts are provided by aspartate 1029 and aspartate 1031. The region spanning 1211–1272 (TLGEHLLGFF…NIEEPFDLSN (62 aa)) is the PAP-associated domain. Positions 1320–1341 (LQQHQQQFEQQLHHPISGQQRS) are enriched in low complexity. The disordered stretch occupies residues 1320–1359 (LQQHQQQFEQQLHHPISGQQRSAGGGGDGANPVPSTLNPD).

It belongs to the DNA polymerase type-B-like family. GLD2 subfamily. As to quaternary structure, interacts with orb, an RNA-binding protein, generating an ovarian cytoplasmic polyadenylation complex. Interacts (via C-terminus) with Dcr-2. Mg(2+) is required as a cofactor. The cofactor is Mn(2+). In terms of tissue distribution, expressed in ovaries. Not expressed in adult males.

The protein resides in the cytoplasm. The enzyme catalyses RNA(n) + ATP = RNA(n)-3'-adenine ribonucleotide + diphosphate. Cytoplasmic poly(A) RNA polymerase that adds successive AMP monomers to the 3'-end of specific maternal RNAs (bcd, Tl, and tor), forming a poly(A) tail, during late oogenesis and early embryogenesis. In contrast to the canonical nuclear poly(A) RNA polymerase, it only adds poly(A) to selected cytoplasmic mRNAs. Required for localization of mRNAs to both poles of the egg, to recruit or maintain known centrosomal proteins with two types of microtubule organizing centers (MTOCs): the central MTOC that forms between the meiosis II tandem spindles and the centrosomes of the mitotic spindle. Required at the final stage of oogenesis for meiosis I metaphase arrest and for progression beyond this stage. Functions with the RNA-binding protein Dcr-2 to promote cytoplasmic polyadenylation and translational activation of certain mRNAs such as Tl and r2d2. As a consequence, is involved in regulating Toll immune signaling and promoting resistance to fungal infection. The protein is Poly(A) RNA polymerase gld-2 homolog B (wisp) of Drosophila melanogaster (Fruit fly).